We begin with the raw amino-acid sequence, 128 residues long: Large ribosomal subunit protein bL20c (128 aa).

The protein belongs to the bacterial ribosomal protein bL20 family.

Its subcellular location is the plastid. The protein resides in the chloroplast. Binds directly to 23S ribosomal RNA and is necessary for the in vitro assembly process of the 50S ribosomal subunit. It is not involved in the protein synthesizing functions of that subunit. In Daucus carota (Wild carrot), this protein is Large ribosomal subunit protein bL20c.